We begin with the raw amino-acid sequence, 386 residues long: L-lactate oxidase (386 aa).

In terms of domain architecture, FMN hydroxy acid dehydrogenase spans 16-382 (AQAPFPICFA…RTITLVKNDG (367 aa)). A pyruvate-binding site is contributed by Tyr-42. Residues 95–97 (PVG), Ser-124, and Gln-146 each bind FMN. Residue Tyr-148 participates in pyruvate binding. Thr-174 is an FMN binding site. A pyruvate-binding site is contributed by Arg-183. 2 residues coordinate FMN: Lys-253 and Ser-275. Positions 277 and 280 each coordinate pyruvate. His-277 functions as the Proton acceptor in the catalytic mechanism. Residues 308-312 (DSGVY) and Arg-332 contribute to the FMN site.

This sequence belongs to the FMN-dependent alpha-hydroxy acid dehydrogenase family. In terms of assembly, homotetramer. FMN is required as a cofactor.

It catalyses the reaction a (2S)-2-hydroxycarboxylate + O2 = a 2-oxocarboxylate + H2O2. It carries out the reaction (S)-lactate + O2 = pyruvate + H2O2. The catalysed reaction is 2-hydroxyoctanoate + O2 = 2-oxooctanoate + H2O2. The enzyme catalyses mandelate + O2 = phenylglyoxylate + H2O2. It catalyses the reaction 2-hydroxyoctadecanoate + O2 = 2-oxooctadecanoate + H2O2. It carries out the reaction (S)-2-hydroxyglutarate + O2 = H2O2 + 2-oxoglutarate. In terms of biological role, oxidase that catalyzes the oxidation of a broad range of 2-hydroxyacids in vitro, such as (S)-lactate, 2-hydroxyoctanoate, mandelate, 2-hydroxyoctadecanoate and (S)-2-hydroxyglutarate, to the corresponding 2-oxoacids, with a reduction of O2 to H2O2. May be involved in the utilization of L-lactate as an energy source for growth. The protein is L-lactate oxidase of Lysinibacillus sphaericus (strain C3-41).